A 305-amino-acid polypeptide reads, in one-letter code: Glycine--tRNA ligase alpha subunit (305 aa).

Belongs to the class-II aminoacyl-tRNA synthetase family. Tetramer of two alpha and two beta subunits.

The protein resides in the cytoplasm. It catalyses the reaction tRNA(Gly) + glycine + ATP = glycyl-tRNA(Gly) + AMP + diphosphate. This chain is Glycine--tRNA ligase alpha subunit, found in Streptococcus pneumoniae serotype 4 (strain ATCC BAA-334 / TIGR4).